Consider the following 299-residue polypeptide: Peroxisomal biogenesis factor 19 (299 aa).

At Ala2 the chain carries N-acetylalanine. The interval 2 to 56 is docking to the peroxisome membrane and binding to PEX3; sequence AAAEGGCGAGVEADRELEELLESALDDFDKAKPSPAPSPTISAPDASGPQKRSPG. Residues 2–91 form a necessary for PEX19 function on peroxisome biogenesis region; that stretch reads AAAEGGCGAG…QATAEFEKAM (90 aa). A disordered region spans residues 25-63; the sequence is ALDDFDKAKPSPAPSPTISAPDASGPQKRSPGDTAKDAL. Residues Ser35, Ser39, Ser54, and Ser66 each carry the phosphoserine modification. Thr236 carries the phosphothreonine modification. The residue at position 296 (Cys296) is a Cysteine methyl ester. A lipid anchor (S-farnesyl cysteine) is attached at Cys296. Positions 297–299 are cleaved as a propeptide — removed in mature form; the sequence is LIM.

It belongs to the peroxin-19 family. In terms of assembly, interacts with a broad range of peroxisomal membrane proteins, including PEX3, PEX10, PEX11A, PEX11B, PEX12, PEX13, PEX14 and PEX16, PXMP2/PMP22, PXMP4/PMP24, SLC25A17/PMP34, ABCD1/ALDP, ABCD2/ALDRP, and ABCD3/PMP70. Also interacts with the tumor suppressor CDKN2A/p19ARF.

The protein resides in the cytoplasm. It is found in the peroxisome membrane. In terms of biological role, necessary for early peroxisomal biogenesis. Acts both as a cytosolic chaperone and as an import receptor for peroxisomal membrane proteins (PMPs). Binds and stabilizes newly synthesized PMPs in the cytoplasm by interacting with their hydrophobic membrane-spanning domains, and targets them to the peroxisome membrane by binding to the integral membrane protein PEX3. Excludes CDKN2A from the nucleus and prevents its interaction with MDM2, which results in active degradation of TP53. This chain is Peroxisomal biogenesis factor 19 (Pex19), found in Rattus norvegicus (Rat).